Reading from the N-terminus, the 129-residue chain is Iron-sulfur cluster assembly 1 homolog, mitochondrial (129 aa).

The N-terminal 12 residues, 1-12 (MSASLVRATVRA), are a transit peptide targeting the mitochondrion. Cys-57, Cys-121, and Cys-123 together coordinate Fe cation.

The protein belongs to the HesB/IscA family. In terms of assembly, interacts with CRY2, but not with CRY1 (in vitro).

Its subcellular location is the mitochondrion. Its function is as follows. Involved in the maturation of mitochondrial 4Fe-4S proteins functioning late in the iron-sulfur cluster assembly pathway. Probably involved in the binding of an intermediate of Fe/S cluster assembly. This chain is Iron-sulfur cluster assembly 1 homolog, mitochondrial (ISCA1), found in Bos taurus (Bovine).